Consider the following 467-residue polypeptide: Acid phosphatase PHO11 (467 aa).

The signal sequence occupies residues 1–17 (MLKSAVYSILAASLVNA). Residue H75 is the Nucleophile of the active site. N-linked (GlcNAc...) asparagine glycosylation is found at N97, N162, N192, N250, and N315. The active-site Proton donor is D338. N-linked (GlcNAc...) asparagine glycosylation is found at N356, N390, N439, N445, and N461.

Belongs to the histidine acid phosphatase family. Post-translationally, glycosylated during secretion across the membrane.

It carries out the reaction a phosphate monoester + H2O = an alcohol + phosphate. In Saccharomyces cerevisiae (strain ATCC 204508 / S288c) (Baker's yeast), this protein is Acid phosphatase PHO11 (PHO11).